Reading from the N-terminus, the 152-residue chain is MAPKAEKKPAAKKPAEEEPAAEKAPAAGKKPKAEKRLPAGKGEKGGAGEGKKAGRKKGKKSVETYKIYIFKVLKQVHPDIGISSKAMSIMNSFINDIFEKLAAEAAKLARYNKKPTITSREIQTSVRLVLPGELAKHAVSEGTKAVTKFTSA.

Composition is skewed to basic and acidic residues over residues 1 to 16 (MAPK…KPAE) and 34 to 52 (EKRL…EGKK). The interval 1–59 (MAPKAEKKPAAKKPAEEEPAAEKAPAAGKKPKAEKRLPAGKGEKGGAGEGKKAGRKKGK) is disordered. 2 positions are modified to N6-acetyllysine: lysine 7 and lysine 35. A Glycyl lysine isopeptide (Lys-Gly) (interchain with G-Cter in ubiquitin) cross-link involves residue lysine 148.

The protein belongs to the histone H2B family. In terms of assembly, the nucleosome is a histone octamer containing two molecules each of H2A, H2B, H3 and H4 assembled in one H3-H4 heterotetramer and two H2A-H2B heterodimers. The octamer wraps approximately 147 bp of DNA. Can be acetylated to form H2BK6ac and H2BK33ac. In terms of processing, monoubiquitinated by BRE1 to form H2BK143ub1 and deubiquitinated by UBP26. Required for heterochromatic histone H3 di- and trimethylation at H3K4me. May give a specific tag for epigenetic transcriptional activation.

The protein localises to the nucleus. It is found in the chromosome. Functionally, core component of nucleosome. Nucleosomes wrap and compact DNA into chromatin, limiting DNA accessibility to the cellular machineries which require DNA as a template. Histones thereby play a central role in transcription regulation, DNA repair, DNA replication and chromosomal stability. DNA accessibility is regulated via a complex set of post-translational modifications of histones, also called histone code, and nucleosome remodeling. The protein is Histone H2B.9 (H2B.9) of Oryza sativa subsp. indica (Rice).